Reading from the N-terminus, the 429-residue chain is MSEAWITLATNDNYAQGALVLVHSLRTAGTTRKIHCLISNEVSAPVRKQLEEHFDDVSIVDVFNSNDSDNLRLIERPDLGVTFTKLHCWRLTQYTKCVFLDADTLVLRNADELFTRPDFSAASDIGWPDSFNSGVFVYVPNNETYRQLVDFAVTHGSYDGGDQGLLNDFFSNWRDLPSEHRLPFIYNMTAGAFYTYAAAYKRYGANTKIVHFIGSVKPWHGSAAVHTGEHFQQWQKIYHAHVNHTSRTNEHAAVFPSHHHTPEHRSHSADHPKIERKDSIVREIGNFVMHVVQSVNILPSYDTDANTSDSHRNNEPHKHDQQREEHHELPHNKFQTPHEESQDIVGSTDCFGSQMPKYNADSETDREVEQITNNTPCPAFVPFERREEYQAASPSTEERRAAWEAGQPDYLGRDAFVHIQEALNRALNE.

Residues Leu8, Thr10, Asn11, Tyr14, and Arg76 each contribute to the UDP site. UDP-alpha-D-glucose is bound by residues Leu8, Thr10, Asn11, Tyr14, Arg76, Lys85, Asp101, Ala102, Asp103, Asn132, Ser133, Asp159, Asp162, and Gln163. Residues Asp101, Ala102, and Asp103 each coordinate UDP. Asp101 contacts Mn(2+). Asp103 lines the Mn(2+) pocket. Tyr194 is a glycosylation site (O-linked (Glc...) tyrosine). Positions 211, 214, and 217 each coordinate UDP. His211 lines the Mn(2+) pocket. 2 residues coordinate UDP-alpha-D-glucose: Gly214 and Lys217. 2 disordered regions span residues 254–274 (VFPS…HPKI) and 300–338 (SYDT…QTPH). Composition is skewed to basic and acidic residues over residues 263-274 (EHRSHSADHPKI) and 309-338 (DSHR…QTPH).

The protein belongs to the glycosyltransferase 8 family. Glycogenin subfamily. In terms of assembly, forms a heterooctamer with one molecule of gyg-1 bound to each protomer of the gys-1 homotetramer. The N-terminus of gys-1 is involved in interprotomer contacts with gyg-1. The interaction with gys-1 is required for glycogen production but is not required for gys-1 intrinsic activity. Mn(2+) serves as cofactor. Self-glycosylated by the transfer of glucose residues from UDP-glucose to itself, forming an alpha-1,4-glycan of around 10 residues attached to Tyr-194.

It is found in the cytoplasm. Its subcellular location is the nucleus. It catalyses the reaction L-tyrosyl-[glycogenin] + UDP-alpha-D-glucose = alpha-D-glucosyl-L-tyrosyl-[glycogenin] + UDP + H(+). The catalysed reaction is [1,4-alpha-D-glucosyl](n)-L-tyrosyl-[glycogenin] + UDP-alpha-D-glucose = [1,4-alpha-D-glucosyl](n+1)-L-tyrosyl-[glycogenin] + UDP + H(+). The protein operates within glycan biosynthesis; glycogen biosynthesis. In terms of biological role, self-glucosylating initiator of glycogen synthesis. It catalyzes the formation of a short alpha (1,4)-glucosyl chain covalently attached via a glucose 1-O-tyrosyl linkage to internal tyrosine residues and these chains act as primers for the elongation reaction catalyzed by glycogen synthase. The chain is Glycogenin-1 from Caenorhabditis elegans.